A 997-amino-acid chain; its full sequence is Protein translocase subunit SecA (997 aa).

ATP contacts are provided by residues Q84, 102 to 106 (GEGKT), and D582. The tract at residues 950–997 (PYVPVPEAKPEPSEVFGVERKRATPPPQPGLSRAERRRLMRQEKKRKK) is disordered. Residues 957 to 971 (AKPEPSEVFGVERKR) are compositionally biased toward basic and acidic residues. Residues 984-997 (ERRRLMRQEKKRKK) show a composition bias toward basic residues.

Belongs to the SecA family. Monomer and homodimer. Part of the essential Sec protein translocation apparatus which comprises SecA, SecYEG and auxiliary proteins SecDF. Other proteins may also be involved.

The protein resides in the cell inner membrane. It localises to the cytoplasm. The enzyme catalyses ATP + H2O + cellular proteinSide 1 = ADP + phosphate + cellular proteinSide 2.. Part of the Sec protein translocase complex. Interacts with the SecYEG preprotein conducting channel. Has a central role in coupling the hydrolysis of ATP to the transfer of proteins into and across the cell membrane, serving as an ATP-driven molecular motor driving the stepwise translocation of polypeptide chains across the membrane. In Thermus thermophilus (strain ATCC BAA-163 / DSM 7039 / HB27), this protein is Protein translocase subunit SecA.